The sequence spans 1487 residues: Collagen alpha-1(II) chain (1487 aa).

Positions 1 to 25 are cleaved as a signal peptide; it reads MIRLGAPQTLVLLTLLVAAVLRCHG. Positions 26–181 are cleaved as a propeptide — N-terminal propeptide; sequence QDVQKAGSCV…PPGLGGNFAA (156 aa). Residues 32–90 enclose the VWFC domain; that stretch reads GSCVQDGQRYNDKDVWKPEPCRICVCDTGTVLCDDIICEDMKDCLSPETPFGECCPICS. Residues 96 to 1234 are disordered; sequence ASGQPGPKGQ…GLGQREKGPD (1139 aa). 2 stretches are compositionally biased toward basic and acidic residues: residues 105-116 and 133-154; these read QKGEPGDIKDIV and PRGDRGDKGEKGAPGPRGRDGE. Residues 158–173 show a composition bias toward pro residues; it reads PGNPGPPGPPGPPGPP. Residue Lys190 is modified to 5-hydroxylysine. O-linked (Gal...) hydroxylysine glycosylation is present at Lys190. The segment covering 192–203 has biased composition (low complexity); it reads GGAQMGVMQGPM. The segment at 201–1214 is triple-helical region; it reads GPMGPMGPRG…PGPPGPPGPP (1014 aa). Pro residues predominate over residues 208 to 217; sequence PRGPPGPAGA. Residues Pro212, Pro218, Pro230, Pro233, Pro245, Pro248, Pro251, Pro260, Pro269, Pro278, Pro281, and Pro284 each carry the hydroxyproline modification. Residues 218 to 239 are compositionally biased toward low complexity; that stretch reads PGPQGFQGNPGEPGEPGVSGPM. The segment covering 241 to 250 has biased composition (pro residues); it reads PRGPPGPPGK. Residues 251 to 265 are compositionally biased toward basic and acidic residues; the sequence is PGDDGEAGKPGKSGE. Lys287 is modified (5-hydroxylysine). Residue Lys287 is glycosylated (O-linked (Gal...) hydroxylysine). Pro293 carries the hydroxyproline modification. Lys299 is modified (5-hydroxylysine). The O-linked (Gal...) hydroxylysine glycan is linked to Lys299. At Pro305 the chain carries Hydroxyproline. Position 308 is a 5-hydroxylysine (Lys308). An O-linked (Gal...) hydroxylysine glycan is attached at Lys308. The span at 310–320 shows a compositional bias: low complexity; that stretch reads ESGSPGENGSP. Hydroxyproline is present on residues Pro314, Pro320, Pro329, Pro350, Pro356, Pro365, Pro368, and Pro371. Residues 335 to 350 are compositionally biased toward low complexity; it reads TGPAGAAGARGNDGQP. Over residues 360-369 the composition is skewed to gly residues; the sequence is GPAGGPGFPG. 2 stretches are compositionally biased toward low complexity: residues 370–382 and 391–431; these read APGAKGEAGPTGA and PRGE…AGAP. Lys374 is subject to 5-hydroxylysine. O-linked (Gal...) hydroxylysine glycosylation is present at Lys374. Pro395, Pro398, Pro401, Pro410, and Pro416 each carry hydroxyproline. The residue at position 419 (Lys419) is a 5-hydroxylysine. Hydroxyproline occurs at positions 425, 431, 434, and 440. Residues 433-442 are compositionally biased toward pro residues; sequence FPGPRGPPGP. 5-hydroxylysine is present on Lys452. Pro458 carries the post-translational modification Hydroxyproline. Residues Lys464 and Lys470 each carry the 5-hydroxylysine modification. Hydroxyproline occurs at positions 473, 482, 497, 506, 512, and 518. Lys527 is subject to 5-hydroxylysine. Hydroxyproline is present on Pro530. Lys542 bears the 5-hydroxylysine mark. Hydroxyproline is present on residues Pro551, Pro557, Pro566, Pro581, Pro587, Pro590, Pro599, and Pro605. Position 608 is a 5-hydroxylysine (Lys608). Residue Lys608 is glycosylated (O-linked (Gal...) hydroxylysine). Pro614 carries the hydroxyproline modification. The residue at position 620 (Lys620) is a 5-hydroxylysine. Lys620 carries O-linked (Gal...) hydroxylysine glycosylation. Residues 622–631 are compositionally biased toward low complexity; it reads LPGAPGLRGL. Pro623, Pro626, Pro632, Pro644, Pro659, and Pro668 each carry hydroxyproline. The span at 656–667 shows a compositional bias: low complexity; sequence QGAPGPSGFQGL. Pro670 carries the 3-hydroxyproline modification. 2 positions are modified to hydroxyproline: Pro671 and Pro674. Residues 721–736 are compositionally biased toward low complexity; the sequence is LPGTPGTDGPKGAAGP. Positions 764-775 are enriched in basic and acidic residues; the sequence is KGDRGDVGEKGP. Composition is skewed to low complexity over residues 833–848 and 877–913; these read AGFAGPPGADGQPGAK and PTGVTGPKGARGAQGPPGATGFPGAAGRVGPPGSNGN. Pro907 is subject to 3-hydroxyproline. Pro908, Pro914, and Pro920 each carry 4-hydroxyproline. The segment covering 1069-1079 has biased composition (pro residues); sequence APGPPGSPGPA. Over residues 1091–1109 the composition is skewed to low complexity; sequence AGAQGPMGPAGPAGARGMP. Residues 1115–1129 are compositionally biased toward basic and acidic residues; that stretch reads RGDKGETGEAGERGL. Lys1130 is modified (5-hydroxylysine). An O-linked (Gal...) hydroxylysine glycan is attached at Lys1130. 3-hydroxyproline is present on Pro1144. A compositionally biased stretch (low complexity) spans 1148-1157; that stretch reads SGDQGASGPA. At Pro1181 the chain carries 4-hydroxyproline. The residue at position 1186 (Pro1186) is a 3-hydroxyproline. Position 1187 is a 4-hydroxyproline (Pro1187). The span at 1199-1216 shows a compositional bias: pro residues; that stretch reads AGPPGNPGPPGPPGPPGP. Pro1201 carries the 3-hydroxyproline modification. Pro1202 and Pro1205 each carry 4-hydroxyproline. Position 1207 is a 3-hydroxyproline (Pro1207). 2 positions are modified to 4-hydroxyproline: Pro1208 and Pro1211. 3-hydroxyproline is present on Pro1213. At Pro1214 the chain carries 4-hydroxyproline. Positions 1215-1241 are nonhelical region (C-terminal); the sequence is GPGIDMSAFAGLGQREKGPDPLQYMRA. A Fibrillar collagen NC1 domain is found at 1253-1487; it reads AEVDATLKSL…GVDIGPVCFL (235 aa). 3 disulfides stabilise this stretch: Cys1283–Cys1315, Cys1323–Cys1485, and Cys1393–Cys1438. Residues Asp1301, Asn1303, Gln1304, Cys1306, and Asp1309 each coordinate Ca(2+). Asn1388 carries N-linked (GlcNAc...) asparagine glycosylation.

The protein belongs to the fibrillar collagen family. Homotrimers of alpha 1(II) chains. Probably 3-hydroxylated on prolines by LEPREL1. Proline residues at the third position of the tripeptide repeating unit (G-X-P) are hydroxylated in some or all of the chains. Proline residues at the second position of the tripeptide repeating unit (G-P-X) are hydroxylated in some of the chains. Post-translationally, O-linked glycans consist of Glc-Gal disaccharides bound to the oxygen atom of post-translationally added hydroxyl groups. In terms of processing, contains mostly 4-hydroxyproline. Prolines at the third position of the tripeptide repeating unit (G-X-P) are 4-hydroxylated in some or all of the chains. Contains 3-hydroxyproline at a few sites. This modification occurs on the first proline residue in the sequence motif Gly-Pro-Hyp, where Hyp is 4-hydroxyproline. Post-translationally, lysine residues at the third position of the tripeptide repeating unit (G-X-Y) are 5-hydroxylated in some or all of the chains. In terms of processing, O-glycosylated on hydroxylated lysine residues. The O-linked glycan consists of a Glc-Gal disaccharide.

Its subcellular location is the secreted. The protein localises to the extracellular space. It localises to the extracellular matrix. Functionally, type II collagen is specific for cartilaginous tissues. It is essential for the normal embryonic development of the skeleton, for linear growth and for the ability of cartilage to resist compressive forces. The chain is Collagen alpha-1(II) chain from Bos taurus (Bovine).